The following is a 146-amino-acid chain: D-aminoacyl-tRNA deacylase (146 aa).

The Gly-cisPro motif, important for rejection of L-amino acids motif lies at Gly-137–Pro-138.

This sequence belongs to the DTD family. As to quaternary structure, homodimer.

Its subcellular location is the cytoplasm. The enzyme catalyses glycyl-tRNA(Ala) + H2O = tRNA(Ala) + glycine + H(+). The catalysed reaction is a D-aminoacyl-tRNA + H2O = a tRNA + a D-alpha-amino acid + H(+). Its function is as follows. An aminoacyl-tRNA editing enzyme that deacylates mischarged D-aminoacyl-tRNAs. Also deacylates mischarged glycyl-tRNA(Ala), protecting cells against glycine mischarging by AlaRS. Acts via tRNA-based rather than protein-based catalysis; rejects L-amino acids rather than detecting D-amino acids in the active site. By recycling D-aminoacyl-tRNA to D-amino acids and free tRNA molecules, this enzyme counteracts the toxicity associated with the formation of D-aminoacyl-tRNA entities in vivo and helps enforce protein L-homochirality. In Bacillus cereus (strain B4264), this protein is D-aminoacyl-tRNA deacylase.